Consider the following 365-residue polypeptide: Galactoside alpha-(1,2)-fucosyltransferase 1 (365 aa).

Residues 1-8 (MWPLSHRH) are Cytoplasmic-facing. A helical; Signal-anchor for type II membrane protein membrane pass occupies residues 9-25 (LCLAFLLVCVLSAISFF). Residues 26 to 365 (LHIYQDSIRH…LSPLWTLAEP (340 aa)) are Lumenal-facing. Residues asparagine 65, asparagine 301, and asparagine 327 are each glycosylated (N-linked (GlcNAc...) asparagine).

It belongs to the glycosyltransferase 11 family.

The protein resides in the golgi apparatus. It localises to the golgi stack membrane. The catalysed reaction is a beta-D-galactosyl-(1-&gt;4)-N-acetyl-beta-D-glucosaminyl derivative + GDP-beta-L-fucose = an alpha-L-Fuc-(1-&gt;2)-beta-D-Gal-(1-&gt;4)-beta-D-GlcNAc derivative + GDP + H(+). The enzyme catalyses a ganglioside GA1 + GDP-beta-L-fucose = a ganglioside Fuc-GA1 + GDP + H(+). It carries out the reaction a beta-D-Gal-(1-&gt;3)-beta-D-GlcNAc-(1-&gt;3)-beta-D-Gal-(1-&gt;4)-beta-D-Glc-(1&lt;-&gt;1')-Cer(d18:1(4E)) + GDP-beta-L-fucose = alpha-L-fucosyl-(1-&gt;2)- beta-D-galactosyl-(1-&gt;3)-N-acetyl-beta-D-glucosaminyl-(1-&gt;3)-beta-D-galactosyl-(1-&gt;4)-beta-D-glucosyl-(1&lt;-&gt;1')-N-acylsphing-4-enine + GDP + H(+). It catalyses the reaction a neolactoside nLc4Cer(d18:1(4E)) + GDP-beta-L-fucose = a neolactoside IV(2)-alpha-Fuc-nLc4Cer(d18:1(4E)) + GDP + H(+). The catalysed reaction is a ganglioside GM1 + GDP-beta-L-fucose = a ganglioside Fuc-GM1 + GDP + H(+). The enzyme catalyses beta-D-galactosyl-(1-&gt;3)-N-acetyl-D-galactosamine + GDP-beta-L-fucose = alpha-L-fucosyl-(1-&gt;2)-beta-D-galactosyl-(1-&gt;3)-N-acetyl-D-galactosamine + GDP + H(+). It participates in protein modification; protein glycosylation. In terms of biological role, catalyzes the transfer of L-fucose, from a guanosine diphosphate-beta-L-fucose, to the terminal galactose residue of glycoconjugates through an alpha(1,2) linkage leading to H antigen synthesis that is an intermediate substrate in the synthesis of ABO blood group antigens. H antigen is essential for maturation of the glomerular layer of the main olfactory bulb, in cell migration and early cell-cell contacts during tumor associated angiogenesis. Preferentially fucosylates soluble lactose and to a lesser extent fucosylates glycolipids gangliosides GA1 and GM1a. The protein is Galactoside alpha-(1,2)-fucosyltransferase 1 of Mico humeralifer (Black and white tassel-ear marmoset).